A 316-amino-acid chain; its full sequence is Beta-ketoacyl-[acyl-carrier-protein] synthase III (316 aa).

Residues Cys112 and His243 contribute to the active site. The interval Gln244–Arg248 is ACP-binding. Asn273 is a catalytic residue.

It belongs to the thiolase-like superfamily. FabH family. Homodimer.

It localises to the cytoplasm. It carries out the reaction malonyl-[ACP] + acetyl-CoA + H(+) = 3-oxobutanoyl-[ACP] + CO2 + CoA. Its pathway is lipid metabolism; fatty acid biosynthesis. Its function is as follows. Catalyzes the condensation reaction of fatty acid synthesis by the addition to an acyl acceptor of two carbons from malonyl-ACP. Catalyzes the first condensation reaction which initiates fatty acid synthesis and may therefore play a role in governing the total rate of fatty acid production. Possesses both acetoacetyl-ACP synthase and acetyl transacylase activities. Its substrate specificity determines the biosynthesis of branched-chain and/or straight-chain of fatty acids. This is Beta-ketoacyl-[acyl-carrier-protein] synthase III from Histophilus somni (strain 129Pt) (Haemophilus somnus).